Here is a 131-residue protein sequence, read N- to C-terminus: Small ribosomal subunit protein uS8 (131 aa).

Belongs to the universal ribosomal protein uS8 family. As to quaternary structure, part of the 30S ribosomal subunit. Contacts proteins S5 and S12.

Its function is as follows. One of the primary rRNA binding proteins, it binds directly to 16S rRNA central domain where it helps coordinate assembly of the platform of the 30S subunit. In Campylobacter hominis (strain ATCC BAA-381 / DSM 21671 / CCUG 45161 / LMG 19568 / NCTC 13146 / CH001A), this protein is Small ribosomal subunit protein uS8.